We begin with the raw amino-acid sequence, 610 residues long: Elongation factor 4 (610 aa).

The tr-type G domain occupies 12–194; it reads EKIRNFSIIA…QIVEKVPAPQ (183 aa). Residues 24–29 and 141–144 contribute to the GTP site; these read DHGKST and NKID.

This sequence belongs to the TRAFAC class translation factor GTPase superfamily. Classic translation factor GTPase family. LepA subfamily.

Its subcellular location is the cell membrane. It carries out the reaction GTP + H2O = GDP + phosphate + H(+). Its function is as follows. Required for accurate and efficient protein synthesis under certain stress conditions. May act as a fidelity factor of the translation reaction, by catalyzing a one-codon backward translocation of tRNAs on improperly translocated ribosomes. Back-translocation proceeds from a post-translocation (POST) complex to a pre-translocation (PRE) complex, thus giving elongation factor G a second chance to translocate the tRNAs correctly. Binds to ribosomes in a GTP-dependent manner. In Streptococcus thermophilus (strain ATCC BAA-250 / LMG 18311), this protein is Elongation factor 4.